The primary structure comprises 360 residues: Peptide chain release factor 1 (360 aa).

Gln-235 is modified (N5-methylglutamine).

Belongs to the prokaryotic/mitochondrial release factor family. Methylated by PrmC. Methylation increases the termination efficiency of RF1.

The protein localises to the cytoplasm. Peptide chain release factor 1 directs the termination of translation in response to the peptide chain termination codons UAG and UAA. The protein is Peptide chain release factor 1 of Bordetella pertussis (strain Tohama I / ATCC BAA-589 / NCTC 13251).